The sequence spans 318 residues: Aspartate carbamoyltransferase catalytic subunit (318 aa).

Carbamoyl phosphate contacts are provided by Arg-57 and Thr-58. Residue Lys-85 coordinates L-aspartate. Carbamoyl phosphate is bound by residues Arg-107, His-141, and Gln-144. Residues Arg-174 and Arg-228 each coordinate L-aspartate. The carbamoyl phosphate site is built by Gly-269 and Pro-270.

It belongs to the aspartate/ornithine carbamoyltransferase superfamily. ATCase family. Heterododecamer (2C3:3R2) of six catalytic PyrB chains organized as two trimers (C3), and six regulatory PyrI chains organized as three dimers (R2).

The enzyme catalyses carbamoyl phosphate + L-aspartate = N-carbamoyl-L-aspartate + phosphate + H(+). It participates in pyrimidine metabolism; UMP biosynthesis via de novo pathway; (S)-dihydroorotate from bicarbonate: step 2/3. Catalyzes the condensation of carbamoyl phosphate and aspartate to form carbamoyl aspartate and inorganic phosphate, the committed step in the de novo pyrimidine nucleotide biosynthesis pathway. In Mycolicibacterium smegmatis (strain ATCC 700084 / mc(2)155) (Mycobacterium smegmatis), this protein is Aspartate carbamoyltransferase catalytic subunit.